The sequence spans 108 residues: Mitochondrial pyruvate carrier 3 (108 aa).

3 helical membrane-spanning segments follow: residues 19 to 35 (IHFW…IANI), 51 to 67 (IVIT…STVI), and 74 to 90 (LFSV…YQLT).

This sequence belongs to the mitochondrial pyruvate carrier (MPC) (TC 2.A.105) family. In terms of tissue distribution, abundant in leaf and particularly in the guard cells.

It localises to the mitochondrion. The protein localises to the mitochondrion inner membrane. Its function is as follows. Mediates the uptake of pyruvate into mitochondria. Negatively regulates ABA-induced guard cell signaling and mediates drought stress responses. The sequence is that of Mitochondrial pyruvate carrier 3 from Arabidopsis thaliana (Mouse-ear cress).